Reading from the N-terminus, the 146-residue chain is 3-hydroxyacyl-[acyl-carrier-protein] dehydratase FabZ (146 aa).

The active site involves His48.

Belongs to the thioester dehydratase family. FabZ subfamily.

It localises to the cytoplasm. It catalyses the reaction a (3R)-hydroxyacyl-[ACP] = a (2E)-enoyl-[ACP] + H2O. Involved in unsaturated fatty acids biosynthesis. Catalyzes the dehydration of short chain beta-hydroxyacyl-ACPs and long chain saturated and unsaturated beta-hydroxyacyl-ACPs. This chain is 3-hydroxyacyl-[acyl-carrier-protein] dehydratase FabZ, found in Teredinibacter turnerae (strain ATCC 39867 / T7901).